The sequence spans 70 residues: Melittin (70 aa).

The first 21 residues, 1–21 (MKFLVNVALVFMVVYISFIYA), serve as a signal peptide directing secretion. The propeptide at 22-43 (APEPEPAPEAEAEADAEADPEA) is removed by a dipeptidylpeptidase. The residue at position 44 (Gly-44) is an N-formylglycine; partial. Residue Gln-69 is modified to Glutamine amide.

It belongs to the melittin family. In terms of assembly, monomer (in solution and for integration into membranes), homotetramer (in solution and potentially as a toroidal pore in membranes), and potenially homomultimer (as a toroidal pore in membranes). As to expression, expressed by the venom gland.

It localises to the secreted. The protein resides in the target cell membrane. Its function is as follows. Main toxin of bee venom with strong hemolytic activity and antimicrobial activity. It has enhancing effects on bee venom phospholipase A2 activity. This amphipathic toxin binds to negatively charged membrane surface and forms pore by inserting into lipid bilayers inducing the leakage of ions and molecules and the enhancement of permeability that ultimately leads to cell lysis. It acts as a voltage-gated pore with higher selectivity for anions over cations. The ion conductance has been shown to be voltage-dependent. Self-association of melittin in membranes is promoted by high ionic strength, but not by the presence of negatively charged lipids. In vivo, intradermal injection into healthy human volunteers produce sharp pain sensation and an inflammatory response. It produces pain by activating primary nociceptor cells directly and indirectly due to its ability to activate plasma membrane phospholipase A2 and its pore-forming activity. In Polistes hebraeus (Paper wasp), this protein is Melittin (MELT).